The chain runs to 282 residues: PAK4-inhibitor INKA1 (282 aa).

Disordered regions lie at residues 21–50 and 92–127; these read RDTGSPPMSGPLQPKPRTDQNVQPKRQFRA and GFSEVSGSTWREEEPSVPQRQAPRERPPHSQRFSVS. 2 inka box regions span residues 163–200 and 256–282; these read EAEDWTAALLNRGRSRQPLVLGDNCFADLVHNWMELPE and PADISRFAALMNCRSRQPIIYNDVSYL.

It belongs to the INKA family. In terms of assembly, interacts with PAK4. In terms of tissue distribution, expressed in tissues of the developing head during neurulation.

It is found in the nucleus. The protein resides in the cytoplasm. Functionally, inhibitor of the serine/threonine-protein kinase PAK4. Acts by binding PAK4 in a substrate-like manner, inhibiting the protein kinase activity. The protein is PAK4-inhibitor INKA1 of Mus musculus (Mouse).